We begin with the raw amino-acid sequence, 227 residues long: UPF0173 metal-dependent hydrolase BCAH820_4729 (227 aa).

The protein belongs to the UPF0173 family.

The sequence is that of UPF0173 metal-dependent hydrolase BCAH820_4729 from Bacillus cereus (strain AH820).